We begin with the raw amino-acid sequence, 271 residues long: 3-methyl-2-oxobutanoate hydroxymethyltransferase (271 aa).

Positions 51 and 90 each coordinate Mg(2+). 3-methyl-2-oxobutanoate contacts are provided by residues D51–S52, D90, and K118. Residue E120 coordinates Mg(2+). The active-site Proton acceptor is the E186.

Belongs to the PanB family. In terms of assembly, homodecamer; pentamer of dimers. The cofactor is Mg(2+).

It localises to the cytoplasm. The enzyme catalyses 3-methyl-2-oxobutanoate + (6R)-5,10-methylene-5,6,7,8-tetrahydrofolate + H2O = 2-dehydropantoate + (6S)-5,6,7,8-tetrahydrofolate. It functions in the pathway cofactor biosynthesis; (R)-pantothenate biosynthesis; (R)-pantoate from 3-methyl-2-oxobutanoate: step 1/2. Its function is as follows. Catalyzes the reversible reaction in which hydroxymethyl group from 5,10-methylenetetrahydrofolate is transferred onto alpha-ketoisovalerate to form ketopantoate. The sequence is that of 3-methyl-2-oxobutanoate hydroxymethyltransferase from Xanthomonas oryzae pv. oryzae (strain MAFF 311018).